The primary structure comprises 381 residues: Succinyl-diaminopimelate desuccinylase (381 aa).

H68 provides a ligand contact to Zn(2+). The active site involves D70. D101 contributes to the Zn(2+) binding site. E135 (proton acceptor) is an active-site residue. Zn(2+)-binding residues include E136, E164, and H350.

Belongs to the peptidase M20A family. DapE subfamily. Homodimer. Zn(2+) serves as cofactor. The cofactor is Co(2+).

The catalysed reaction is N-succinyl-(2S,6S)-2,6-diaminopimelate + H2O = (2S,6S)-2,6-diaminopimelate + succinate. It functions in the pathway amino-acid biosynthesis; L-lysine biosynthesis via DAP pathway; LL-2,6-diaminopimelate from (S)-tetrahydrodipicolinate (succinylase route): step 3/3. Functionally, catalyzes the hydrolysis of N-succinyl-L,L-diaminopimelic acid (SDAP), forming succinate and LL-2,6-diaminopimelate (DAP), an intermediate involved in the bacterial biosynthesis of lysine and meso-diaminopimelic acid, an essential component of bacterial cell walls. The chain is Succinyl-diaminopimelate desuccinylase from Neisseria meningitidis serogroup A / serotype 4A (strain DSM 15465 / Z2491).